The chain runs to 144 residues: D-aminoacyl-tRNA deacylase (144 aa).

Residues 136-137 (GP) carry the Gly-cisPro motif, important for rejection of L-amino acids motif.

Belongs to the DTD family. In terms of assembly, homodimer.

It localises to the cytoplasm. The enzyme catalyses glycyl-tRNA(Ala) + H2O = tRNA(Ala) + glycine + H(+). It carries out the reaction a D-aminoacyl-tRNA + H2O = a tRNA + a D-alpha-amino acid + H(+). An aminoacyl-tRNA editing enzyme that deacylates mischarged D-aminoacyl-tRNAs. Also deacylates mischarged glycyl-tRNA(Ala), protecting cells against glycine mischarging by AlaRS. Acts via tRNA-based rather than protein-based catalysis; rejects L-amino acids rather than detecting D-amino acids in the active site. By recycling D-aminoacyl-tRNA to D-amino acids and free tRNA molecules, this enzyme counteracts the toxicity associated with the formation of D-aminoacyl-tRNA entities in vivo and helps enforce protein L-homochirality. The chain is D-aminoacyl-tRNA deacylase from Actinobacillus pleuropneumoniae serotype 5b (strain L20).